The primary structure comprises 544 residues: MALTLLRGMRTPVVARRNAGLFFTTLQSPLLSRFTMRAESARAAAPKSIQLATKEAAEQKAQGFEAVIGIETHVQLSTVTKAFCSCPYSYGSQPNSTVCPTCMGHPGTLPVLNAKVVECAVRLGLALNCEIAMTSKFDRKQYFYPDLPKGYQISQFDIPIAKEGYLDLDLPVEFGGGHRRFGVTRVHMEEDAGKLLHSESGSYSQVDLNRAGVPLLEIVSEPDMRTGIEAAEYGAELQRLVRYLGVSNGNMQEGSLRCDVNVSVRPIGQSNFGTKVEIKNMNSFSAISRAIDYEISRQILLHKEGQADQIVQETRLWDESSQKTFTMRKKEGLADYRYFPEPDLPEVVLTSEYIDEIQNSMPELPEAKRRRFENMGLSMQDVLFLANDDNVARFFDSTLEHGADAKLAANWIMGDIAAYLKNEKLSIDEIKLTPLELSELIASIRNGTISGKIGKEILIELIAKGGTVKSVIEEKDLVQIADPAAIEAMVDQVLADNPKQLEQYRSGKTKLQGFFAGQVMKASKGKANPVLLNKILGEKLKANS.

The protein belongs to the GatB/GatE family. GatB subfamily. Subunit of the heterotrimeric GatCAB amidotransferase (AdT) complex, composed of A, B and C subunits.

Its subcellular location is the mitochondrion. It is found in the plastid. The protein localises to the chloroplast. It carries out the reaction L-glutamyl-tRNA(Gln) + L-glutamine + ATP + H2O = L-glutaminyl-tRNA(Gln) + L-glutamate + ADP + phosphate + H(+). Allows the formation of correctly charged Gln-tRNA(Gln) through the transamidation of misacylated Glu-tRNA(Gln) in chloroplasts and mitochondria. The reaction takes place in the presence of glutamine and ATP through an activated gamma-phospho-Glu-tRNA(Gln). In Oryza sativa subsp. japonica (Rice), this protein is Glutamyl-tRNA(Gln) amidotransferase subunit B, chloroplastic/mitochondrial.